We begin with the raw amino-acid sequence, 8384 residues long: Mucin-19 (8384 aa).

The first 21 residues, 1–21, serve as a signal peptide directing secretion; that stretch reads MKLILWYLVVALWCFFKDVEA. Disordered regions lie at residues 33–197, 222–247, 279–305, and 332–467; these read AASR…YGAG, SKADGRETRGSGSAGGETIVFGPDAG, GDTGISSKTVEGNQTSSSGGSVSIDLG, and QEGF…PEAT. Composition is skewed to low complexity over residues 35-48 and 88-98; these read SRSGGFSYGSSSSG and GGFFNSSSSSG. Over residues 169–184 the composition is skewed to basic and acidic residues; sequence DKSRERWDAGNSRSED. Residues 187–197 are compositionally biased toward polar residues; sequence ADSTNTRYGAG. Positions 279 to 299 are enriched in polar residues; it reads GDTGISSKTVEGNQTSSSGGS. A compositionally biased stretch (low complexity) spans 359-369; that stretch reads GSDSSSSGDSS. Residues 370–381 show a composition bias toward polar residues; that stretch reads ARNGFENSSGIS. Low complexity-rich tracts occupy residues 424 to 435 and 443 to 452; these read SDSGGNTWSSDS and TSSSEYSTSG. VWFD domains lie at 478–649, 815–995, and 1274–1447; these read GEIS…QHCN, GRCK…SSCI, and TICH…QECS. Cystine bridges form between Cys502–Cys648, Cys817–Cys952, Cys838–Cys994, Cys857–Cys865, Cys1276–Cys1411, Cys1298–Cys1446, Cys1307–Cys1408, and Cys1323–Cys1330. 27 disordered regions span residues 1680 to 1699, 1732 to 2464, 2484 to 2526, 2540 to 2827, 2850 to 2917, 2984 to 3027, 3075 to 3368, 3386 to 3428, 3585 to 3628, 3667 to 3736, 4105 to 4147, 4187 to 4251, 4315 to 4390, 4414 to 4455, 4510 to 4583, 4790 to 4843, 4895 to 4930, 5130 to 5161, 5429 to 5452, 5464 to 5494, 5880 to 5918, 6069 to 6403, 6440 to 6918, 6953 to 7223, 7250 to 7749, 7783 to 7975, and 8020 to 8133; these read TSSSETTGTTLGPLTEPFTT, AGTT…KSPG, LESE…TEGS, RPLD…MTGT, STVG…LGTI, VTTG…SGTT, GTTG…GKTG, TTRL…GKTG, ETTG…TNGL, GSSA…TGLP, TGSS…NGLS, SAGV…AEVT, GLSA…SARV, TGSS…TNGQ, TGTT…TGLP, SSAGVTGTNGLSAEATETTGPSAGVTGTTGLSAGVT, TGTTGPSAEETGATGPSAEVTGTTGPSGGVTG, VTGTTELSAEVTEKTGPSAEVTGK, GPSAEVTGTTGSSAGVTGTTGPSAGVTGTTG, GTSIPLTGKTGTTRTSVEESTTTGPSAGITGTNGLSAEM, TGKT…STES, GRAT…ETTK, GTSE…TGFK, SFST…SKTG, KNGS…EAGS, and SGRS…VSQP. Low complexity-rich tracts occupy residues 1732–1746, 1772–1813, and 1820–1833; these read AGTTGGVDAATTGAA, PGEA…TTGP, and GATSSEATSSEGMS. A compositionally biased stretch (polar residues) spans 1835 to 1860; that stretch reads VTGQSLGSTAGSDSEITAKTSFTGSS. Residues 1868–1879 show a composition bias toward low complexity; that stretch reads PSPGSPGHFSGG. The segment covering 1880–1905 has biased composition (polar residues); sequence TTEWGNVATTGAAGENTSGALGSTEG. Low complexity predominate over residues 1909 to 1921; the sequence is ATTSAGSGNTAGT. The segment covering 1950–1968 has biased composition (polar residues); it reads GSSTPGEADIGNTSFGKSG. Low complexity-rich tracts occupy residues 1969-1983 and 2013-2049; these read TPTVSAASTTSSPVS and GGKITSGWSSSGTSTGASNTPGATGSSTGQTDTSGPS. Polar residues predominate over residues 2055–2100; that stretch reads NYGQSSEIPGTIKSSSDVSGTMGQSDTTSGPSVAVTRTSEQSSGVT. Low complexity-rich tracts occupy residues 2132 to 2147 and 2159 to 2170; these read TTGSSAEGSGTTGPSS and GSGTSGQSVTGS. Composition is skewed to polar residues over residues 2171 to 2186 and 2209 to 2225; these read RATGLSATELGTTVSF and GSGTTGPSVVRSGTTRL. Composition is skewed to low complexity over residues 2233–2246 and 2280–2313; these read TESSPGVTGTTTPS and SGPSVVGSGTTGPTSAGLGTTAPSTRRSSTTKPS. Positions 2238-6086 are approximate repeats of G-V-T-G-T-T-G-P-S-A; that stretch reads GVTGTTTPSA…GVTGTTGLSA (3849 aa). Composition is skewed to polar residues over residues 2316–2332 and 2354–2372; these read RTGTTGQSGAESGTTEP and ATESSTSRPLGETTGTTIP. Positions 2403 to 2419 are enriched in gly residues; the sequence is SSGGSGATRSSGGGMGT. Residues 2420 to 2441 are compositionally biased toward low complexity; sequence TGQSTARSETTGPLFGLTGTFG. Residues 2442 to 2460 show a composition bias toward polar residues; it reads QSATVTGTSSNSAGVTTPE. Low complexity-rich tracts occupy residues 2512 to 2526, 2545 to 2571, and 2578 to 2589; these read SAGETGTTEPSTEGS, GSGTTGTLSGGSSTTRSSDGTTGTTRK, and TTGLSGLTGTSG. Polar residues-rich tracts occupy residues 2595–2610 and 2638–2653; these read TGTSSKSAGVTVTSEK and TRPSGGVTVTSGQSAR. Low complexity predominate over residues 2654–2681; sequence VTETVGASAGVTGTTGPSTEGSGATGPS. 2 stretches are compositionally biased toward polar residues: residues 2695 to 2748 and 2755 to 2770; these read SGTT…TGTT and TETTRPSVVKSGTTGP. The span at 2787 to 2799 shows a compositional bias: low complexity; that stretch reads ATRSSGGETETTG. Composition is skewed to polar residues over residues 2800-2827, 2850-2859, and 2874-2892; these read QSAVKSGTTESFTRLTRTSGQSAGMTGT, STVGLETTRP, and AQTTGPSAGVTVTSGQSAR. The segment covering 2894–2910 has biased composition (low complexity); that stretch reads TGASGPSVGVTGTTGPA. Positions 2984 to 2998 are enriched in polar residues; the sequence is VTTGPSVTGVETTAK. Residues 2999–3027 show a composition bias toward low complexity; it reads TTSGGLSTTISSVGGTGTTGQSPERSGTT. The segment covering 3099 to 3109 has biased composition (polar residues); the sequence is PSITGSGTTRP. A compositionally biased stretch (low complexity) spans 3114–3130; the sequence is SWTAGTSSGGHSTTSPS. Residues 3131-3159 show a composition bias toward polar residues; that stretch reads VRGTETTGQSAAESVTTGPVTGYTETSGP. Positions 3172 to 3188 are enriched in low complexity; it reads TVTQTTGSSAAVSGTTV. A compositionally biased stretch (polar residues) spans 3189 to 3224; the sequence is QSLTVSGTTRPSSGQTEITGSSVKESGTTESSAVRS. The segment covering 3225–3277 has biased composition (low complexity); sequence GTTGPTAGVTGTNGPSSAGVTGITGSSPGVTGTTGSSPGVTGTTGSSARSGTS. 2 stretches are compositionally biased toward polar residues: residues 3303-3317 and 3324-3362; these read ITGTNGLSAEVTGTT and TGTTGPSAGVTRTTGLSAGETGTTGLSPGVTRTTRSSAG. Residues 3390–3417 show a composition bias toward low complexity; the sequence is SAGVTGTTGPSPGVTGTTGTPAGVTGTT. Composition is skewed to polar residues over residues 3702–3728 and 4105–4116; these read VTGTTGLSPGVTGTSGLSAEVTGTTGP and TGSSARSGTSIP. Positions 4117–4126 are enriched in low complexity; it reads SVGETGTTRT. Residues 4320–4346 show a composition bias toward polar residues; that stretch reads VTGTTRPSAGVTGTTGQSAEVTGTTEP. Low complexity-rich tracts occupy residues 4347 to 4385 and 4414 to 4426; these read SAGLTETTGSSTGVTGATGPLAGVTGTTGISTEVTGTTG and TGSSARSGTSTPS. 2 stretches are compositionally biased toward low complexity: residues 5469–5494 and 5889–5903; these read VTGTTGSSAGVTGTTGPSAGVTGTTG and TGTTRTSVEESTTTG. 3 stretches are compositionally biased toward polar residues: residues 5908–5918, 6071–6103, and 6111–6121; these read ITGTNGLSAEM, KTRSSAGVTGTTGLSAKSGTSIPSAGKTGTTKT, and TRPSAGITATT. Positions 6156 to 6168 are enriched in low complexity; the sequence is TTTGTTGVTTGTT. Polar residues-rich tracts occupy residues 6217–6248 and 6257–6275; these read EVSTISEVSNTGITGVGSETSIETGISNTATT and APGSSSTEATTSIGGSAST. Positions 6284–6295 are enriched in low complexity; it reads TGSTRGVRTTGS. 2 stretches are compositionally biased toward polar residues: residues 6303–6323 and 6336–6346; these read GEFSGTTISSGGFHTEATTLT and ESTTSLPQSAK. The segment covering 6378–6389 has biased composition (low complexity); the sequence is SGTTISSGGSHT. Polar residues-rich tracts occupy residues 6440–6457 and 6470–6503; these read GRATGATTSIAGSDTSQA and TTITSGDSHTEATALTGSRGSIGTESTVETTTYI. The segment covering 6507–6523 has biased composition (low complexity); the sequence is GTTRGGLATATTGAFSG. Positions 6560 to 6571 are enriched in polar residues; the sequence is TTFTSGGSHTEA. Residues 6581 to 6597 show a composition bias toward low complexity; it reads TGTESRAATTRAAPGTT. The span at 6599-6608 shows a compositional bias: polar residues; it reads VPGSSNTGAT. Residues 6612 to 6628 are compositionally biased toward low complexity; sequence GGSATTRGRITTATTGA. 2 stretches are compositionally biased toward polar residues: residues 6669-6680 and 6689-6698; these read RITSGGSYTATT and APGSSNTGAT. Positions 6707–6718 are enriched in low complexity; sequence TRGRITTATTGA. The span at 6752–6766 shows a compositional bias: polar residues; sequence TTLTGDRSSTGSESR. The segment covering 6767 to 6781 has biased composition (low complexity); that stretch reads TATTGVAPGTTVAPG. A compositionally biased stretch (polar residues) spans 6794-6817; sequence SGTTNIGRATGATTSIVGSDTSQA. Residues 6827–6842 show a composition bias toward low complexity; it reads SPGASSTSQSSRPGTS. Positions 6843–6875 are enriched in polar residues; sequence VTPDSSASESETVTTKEFSGTTAISRTSHTGTP. Positions 6887–6901 are enriched in low complexity; it reads TATTGVAPGTTVAPG. Composition is skewed to polar residues over residues 6902–6911 and 6953–6964; these read SSNTEATTSV and GTSEVAPSTTVA. Positions 6966 to 6994 are enriched in low complexity; it reads GSFSTAATTSPGASGTTGVTTTTKTTTSL. Residues 7006-7041 show a composition bias toward polar residues; the sequence is SATTGAPGSRTGTAGVPSATTVSPGSSNSEATTSVG. Over residues 7045-7074 the composition is skewed to low complexity; sequence KTGAETITEATTSTEGTGTSGTGFKTGTSE. Residues 7085–7094 show a composition bias toward polar residues; sequence SFSTAATTSP. Positions 7095–7112 are enriched in low complexity; sequence GASGMTGVTTTTKTTTSL. Residues 7143–7158 are compositionally biased toward polar residues; the sequence is TRVTPGSSNSEATTSV. Composition is skewed to low complexity over residues 7201–7215 and 7250–7276; these read SGSSNTEATTSTEGT and SFSTATTSSGASGITRAGPTSETTTSL. The span at 7293-7311 shows a compositional bias: polar residues; sequence SGTTVAPGSSNSEATTSVG. Over residues 7379–7397 the composition is skewed to low complexity; the sequence is TTSTKGTGTSGTGFKTGTS. The span at 7403–7421 shows a compositional bias: polar residues; the sequence is TTVSPGSFSTATISPGASR. The span at 7422–7435 shows a compositional bias: low complexity; that stretch reads TTGAAPAAETTTSL. Residues 7465 to 7483 are compositionally biased toward polar residues; that stretch reads SATTIAPGSSNSEATTSLG. Gly residues predominate over residues 7525–7537; that stretch reads PLGGASGTSGGYV. Composition is skewed to polar residues over residues 7544–7557 and 7571–7596; these read PTTSIEETGTSRTI and AGTSVVAPSTTVAPGSFSTAATTSPG. A compositionally biased stretch (low complexity) spans 7600-7613; it reads MTGVRTTSKTTTSL. Composition is skewed to polar residues over residues 7642–7669 and 7698–7708; these read SSRTTILSGSSNTEATNSIEETGTSGTG and SFSTAATTSPG. A compositionally biased stretch (low complexity) spans 7715-7732; the sequence is TGPTAETTTFLGGSSTTG. A compositionally biased stretch (polar residues) spans 7783-7811; the sequence is KNGSMTTALGSQLSSSQTVIPGSSGTISH. Positions 7812–7828 are enriched in low complexity; the sequence is TTVAPGSSVTGTTTGAS. The segment covering 7830 to 7851 has biased composition (polar residues); it reads DQVTGSKTGTTGVALSTTVAPG. Residues 7852–7861 show a composition bias toward low complexity; sequence SSSTEATTST. Residues 7862–7891 show a composition bias toward polar residues; the sequence is GVHRTTVVGQKTGATTRGSAKQGTRSTIEA. Positions 7892–7917 are enriched in low complexity; it reads TTSFRGTGTTGSGMNTGTTGVVSGNT. Polar residues predominate over residues 7918–7934; sequence ISPSSFNTEATSGTSER. Over residues 7938–7952 the composition is skewed to low complexity; sequence GSEIGTTGIVSGTTV. Polar residues-rich tracts occupy residues 7953-7965, 8020-8040, 8048-8081, and 8110-8120; these read APGSSNTEATTSL, SGRSQPTGSKTGYTVTGSGTT, TGNTPGSTGVTSSQEGTTVVSSGITGIPETSISG, and ETGVQTGSTLV. One can recognise a VWFC domain in the interval 8159 to 8225; the sequence is PVCHGPLGEE…DTCCEIGYCE (67 aa). 4 disulfide bridges follow: Cys8288–Cys8339, Cys8306–Cys8353, Cys8315–Cys8369, and Cys8319–Cys8371. The CTCK domain occupies 8288 to 8376; it reads CKNNCRSSLV…TTCSCLDICQ (89 aa).

As to expression, expressed corneal epithelial cells, conjunctival goblet and epithelial cells and lacrimal gland cells (at protein level). Expressed by mucous cells of the submandibular gland and submucosal gland of the trachea. Expressed by middle ear epithelial cells.

It localises to the secreted. In terms of biological role, may function in ocular mucus homeostasis. This chain is Mucin-19 (MUC19), found in Homo sapiens (Human).